The following is a 432-amino-acid chain: Trigger factor (432 aa).

Residues 161–246 enclose the PPIase FKBP-type domain; it reads EDRVTIDFTG…LKKVEERELP (86 aa).

It belongs to the FKBP-type PPIase family. Tig subfamily.

Its subcellular location is the cytoplasm. The catalysed reaction is [protein]-peptidylproline (omega=180) = [protein]-peptidylproline (omega=0). Involved in protein export. Acts as a chaperone by maintaining the newly synthesized protein in an open conformation. Functions as a peptidyl-prolyl cis-trans isomerase. The polypeptide is Trigger factor (Salmonella schwarzengrund (strain CVM19633)).